The chain runs to 282 residues: NH(3)-dependent NAD(+) synthetase (282 aa).

Position 51-58 (G51–S58) interacts with ATP. D57 is a binding site for Mg(2+). R148 contributes to the deamido-NAD(+) binding site. Residue T168 coordinates ATP. E173 contributes to the Mg(2+) binding site. The deamido-NAD(+) site is built by K181 and D188. 2 residues coordinate ATP: K197 and T219. H268–K269 contacts deamido-NAD(+).

This sequence belongs to the NAD synthetase family. In terms of assembly, homodimer.

It catalyses the reaction deamido-NAD(+) + NH4(+) + ATP = AMP + diphosphate + NAD(+) + H(+). It functions in the pathway cofactor biosynthesis; NAD(+) biosynthesis; NAD(+) from deamido-NAD(+) (ammonia route): step 1/1. Catalyzes the ATP-dependent amidation of deamido-NAD to form NAD. Uses ammonia as a nitrogen source. The polypeptide is NH(3)-dependent NAD(+) synthetase (Burkholderia cenocepacia (strain HI2424)).